Consider the following 460-residue polypeptide: Probable Xaa-Pro aminopeptidase PEPP (460 aa).

The Mn(2+) site is built by Asp-256, Asp-267, Glu-390, and Glu-430.

It belongs to the peptidase M24B family. Mn(2+) is required as a cofactor.

The catalysed reaction is Release of any N-terminal amino acid, including proline, that is linked to proline, even from a dipeptide or tripeptide.. In terms of biological role, catalyzes the removal of a penultimate prolyl residue from the N-termini of peptides. This chain is Probable Xaa-Pro aminopeptidase PEPP (PEPP), found in Podospora anserina (strain S / ATCC MYA-4624 / DSM 980 / FGSC 10383) (Pleurage anserina).